We begin with the raw amino-acid sequence, 482 residues long: MKFIIKLFPEITIKSQSVRLRFIKILTGNIRNVLKHYDETLAVVRHWDNIEVRAKDENQRLAIRDALTRIPGIHHILEVEDVPFTDMHDIFEKALVQYRDQLEGKTFCVRVKRRGKHDFSSIDVERYVGGGLNQHIESARVKLTNPDVTVHLEVEDDRLLLIKGRYEGIGGFPIGTQEDVLSLISGGFDSGVSSYMLMRRGCRVHYCFFNLGGAAHEIGVRQVAHYLWNRFGSSHRVRFVAINFEPVVGEILEKIDDGQMGVILKRMMVRAASKVAERYGVQALVTGEALGQVSSQTLTNLRLIDNVSDTLILRPLISYDKEHIINLARQIGTEDFARTMPEYCGVISKSPTVKAVKSKIEAEEEKFDFSILDKVVEEANNVDIREIAQQTEQEVVEVETVNGFGPNDVILDIRSIDEQEDKPLKVEGIDVVSLPFYKLSTKFGDLDQNKTWLLWCERGVMSRLQALYLREQGFNNVKVYRP.

Positions 61 to 165 (LAIRDALTRI…DDRLLLIKGR (105 aa)) constitute a THUMP domain. ATP-binding positions include 183–184 (LI), Lys265, Gly287, and Gln296. Cys344 and Cys456 are joined by a disulfide. Positions 404–482 (FGPNDVILDI…GFNNVKVYRP (79 aa)) constitute a Rhodanese domain. Cys456 (cysteine persulfide intermediate) is an active-site residue.

The protein belongs to the ThiI family.

It localises to the cytoplasm. It carries out the reaction [ThiI sulfur-carrier protein]-S-sulfanyl-L-cysteine + a uridine in tRNA + 2 reduced [2Fe-2S]-[ferredoxin] + ATP + H(+) = [ThiI sulfur-carrier protein]-L-cysteine + a 4-thiouridine in tRNA + 2 oxidized [2Fe-2S]-[ferredoxin] + AMP + diphosphate. It catalyses the reaction [ThiS sulfur-carrier protein]-C-terminal Gly-Gly-AMP + S-sulfanyl-L-cysteinyl-[cysteine desulfurase] + AH2 = [ThiS sulfur-carrier protein]-C-terminal-Gly-aminoethanethioate + L-cysteinyl-[cysteine desulfurase] + A + AMP + 2 H(+). It functions in the pathway cofactor biosynthesis; thiamine diphosphate biosynthesis. Its function is as follows. Catalyzes the ATP-dependent transfer of a sulfur to tRNA to produce 4-thiouridine in position 8 of tRNAs, which functions as a near-UV photosensor. Also catalyzes the transfer of sulfur to the sulfur carrier protein ThiS, forming ThiS-thiocarboxylate. This is a step in the synthesis of thiazole, in the thiamine biosynthesis pathway. The sulfur is donated as persulfide by IscS. In Escherichia coli (strain K12 / MC4100 / BW2952), this protein is tRNA sulfurtransferase.